The sequence spans 204 residues: N-(5'-phosphoribosyl)anthranilate isomerase (204 aa).

It belongs to the TrpF family.

It catalyses the reaction N-(5-phospho-beta-D-ribosyl)anthranilate = 1-(2-carboxyphenylamino)-1-deoxy-D-ribulose 5-phosphate. It participates in amino-acid biosynthesis; L-tryptophan biosynthesis; L-tryptophan from chorismate: step 3/5. This chain is N-(5'-phosphoribosyl)anthranilate isomerase, found in Bacillus cereus (strain Q1).